The primary structure comprises 103 residues: Large ribosomal subunit protein bL21 (103 aa).

This sequence belongs to the bacterial ribosomal protein bL21 family. Part of the 50S ribosomal subunit. Contacts protein L20.

Functionally, this protein binds to 23S rRNA in the presence of protein L20. The sequence is that of Large ribosomal subunit protein bL21 from Idiomarina loihiensis (strain ATCC BAA-735 / DSM 15497 / L2-TR).